We begin with the raw amino-acid sequence, 957 residues long: ERC protein 2 (957 aa).

Positions methionine 1–glycine 13 are enriched in polar residues. The interval methionine 1–leucine 44 is disordered. Residues serine 14–proline 25 show a composition bias toward low complexity. Residues serine 65 and serine 666 each carry the phosphoserine modification. The stretch at arginine 140–aspartate 917 forms a coiled coil. Residues aspartate 918–alanine 957 are disordered. The segment covering histidine 922–histidine 943 has biased composition (basic residues). Over residues aspartate 948 to alanine 957 the composition is skewed to acidic residues.

As to quaternary structure, interacts with BSN, ERC1, PPFIA1, PPFIA2, PPFIA3 and PPFIA4. Interacts through its C-terminus with the PDZ domain of RIMS1. Part of a complex consisting of ERC2, RIMS1 and UNC13A.

Its subcellular location is the cytoplasm. It localises to the synapse. The protein localises to the presynaptic active zone. It is found in the cytoskeleton. Thought to be involved in the organization of the cytomatrix at the nerve terminals active zone (CAZ) which regulates neurotransmitter release. Seems to act together with BSN. May recruit liprin-alpha proteins to the CAZ. The sequence is that of ERC protein 2 (ERC2) from Homo sapiens (Human).